The following is a 190-amino-acid chain: Shikimate kinase (190 aa).

14–19 (GAGKST) serves as a coordination point for ATP. A Mg(2+)-binding site is contributed by Ser-18. 3 residues coordinate substrate: Asp-36, Arg-60, and Gly-82. An ATP-binding site is contributed by Arg-120. Arg-139 contributes to the substrate binding site.

Belongs to the shikimate kinase family. Monomer. The cofactor is Mg(2+).

The protein resides in the cytoplasm. It catalyses the reaction shikimate + ATP = 3-phosphoshikimate + ADP + H(+). It participates in metabolic intermediate biosynthesis; chorismate biosynthesis; chorismate from D-erythrose 4-phosphate and phosphoenolpyruvate: step 5/7. In terms of biological role, catalyzes the specific phosphorylation of the 3-hydroxyl group of shikimic acid using ATP as a cosubstrate. The protein is Shikimate kinase of Thioalkalivibrio sulfidiphilus (strain HL-EbGR7).